We begin with the raw amino-acid sequence, 423 residues long: Probable sodium/metabolite cotransporter BASS3, chloroplastic (423 aa).

The transit peptide at 1 to 45 (MAAAVAASSSSSSSSCAAVGVATASHPHRHRQARFVVSPPAPASP) directs the protein to the chloroplast. 9 consecutive transmembrane segments (helical) span residues 106 to 126 (ALLPLVVAATAVAALGNPATF), 138 to 158 (LGGIMLSIGIKLSIDDFALAF), 165 to 187 (TIGYMAQYIVKPLMGVLIARAFG), 192 to 214 (FFAGFVLTCCVSGAQLSSYASFL), 231 to 251 (ISSVVVTPVLTGLLIGSVVPV), 254 to 274 (IAMAKSILQVVLVPVTLGLLL), 287 to 307 (PVMPFVAMLCTSLCIGSPLAI), 318 to 338 (FLLLLPIVTFHIAAFIVGYWI), and 380 to 400 (VPAACSVVIMAIFGLTLASYW).

This sequence belongs to the bile acid:sodium symporter (BASS) (TC 2.A.28) family.

The protein localises to the membrane. It localises to the plastid. Its subcellular location is the chloroplast envelope. Functionally, may function as sodium-coupled metabolite transporter across the chloroplast envelope. This chain is Probable sodium/metabolite cotransporter BASS3, chloroplastic (BASS3), found in Oryza sativa subsp. japonica (Rice).